The following is a 132-amino-acid chain: Sec-independent protein translocase protein TatB (132 aa).

The chain crosses the membrane as a helical span at residues 2–22; sequence FDGIGFMELLLIGILGLVVLG. Residues 68-132 are disordered; the sequence is ENQGLKDLSP…VSANPDKSNR (65 aa). Positions 102 to 122 are enriched in low complexity; that stretch reads TPSASSSAPSESTPSEAPTAE.

Belongs to the TatB family. The Tat system comprises two distinct complexes: a TatABC complex, containing multiple copies of TatA, TatB and TatC subunits, and a separate TatA complex, containing only TatA subunits. Substrates initially bind to the TatABC complex, which probably triggers association of the separate TatA complex to form the active translocon.

The protein resides in the cell inner membrane. Functionally, part of the twin-arginine translocation (Tat) system that transports large folded proteins containing a characteristic twin-arginine motif in their signal peptide across membranes. Together with TatC, TatB is part of a receptor directly interacting with Tat signal peptides. TatB may form an oligomeric binding site that transiently accommodates folded Tat precursor proteins before their translocation. In Shewanella woodyi (strain ATCC 51908 / MS32), this protein is Sec-independent protein translocase protein TatB.